Consider the following 287-residue polypeptide: Probable endoribonuclease YicC (287 aa).

It belongs to the YicC/YloC family. The cofactor is a divalent metal cation.

In terms of biological role, probably a ssRNA endonuclease. Might contribute to small RNA (sRNA) regulation. This Salmonella typhimurium (strain LT2 / SGSC1412 / ATCC 700720) protein is Probable endoribonuclease YicC.